A 619-amino-acid polypeptide reads, in one-letter code: DNA mismatch repair protein MutL (619 aa).

Belongs to the DNA mismatch repair MutL/HexB family.

Its function is as follows. This protein is involved in the repair of mismatches in DNA. It is required for dam-dependent methyl-directed DNA mismatch repair. May act as a 'molecular matchmaker', a protein that promotes the formation of a stable complex between two or more DNA-binding proteins in an ATP-dependent manner without itself being part of a final effector complex. This chain is DNA mismatch repair protein MutL, found in Myxococcus xanthus (strain DK1622).